The chain runs to 448 residues: Trigger factor (448 aa).

One can recognise a PPIase FKBP-type domain in the interval Asp162–Pro243. A disordered region spans residues Asp426 to Glu448. Residues Phe437 to Glu448 show a composition bias toward acidic residues.

This sequence belongs to the FKBP-type PPIase family. Tig subfamily.

It is found in the cytoplasm. It catalyses the reaction [protein]-peptidylproline (omega=180) = [protein]-peptidylproline (omega=0). Its function is as follows. Involved in protein export. Acts as a chaperone by maintaining the newly synthesized protein in an open conformation. Functions as a peptidyl-prolyl cis-trans isomerase. This chain is Trigger factor, found in Corynebacterium diphtheriae (strain ATCC 700971 / NCTC 13129 / Biotype gravis).